The chain runs to 319 residues: tRNA N6-adenosine threonylcarbamoyltransferase (319 aa).

His110 and His114 together coordinate Fe cation. Residues 135-139 (VVSGG), Asp168, Gly181, Asp185, and Asn277 contribute to the substrate site. Position 301 (Asp301) interacts with Fe cation.

It belongs to the KAE1 / TsaD family. Requires Fe(2+) as cofactor.

The protein localises to the cytoplasm. The enzyme catalyses L-threonylcarbamoyladenylate + adenosine(37) in tRNA = N(6)-L-threonylcarbamoyladenosine(37) in tRNA + AMP + H(+). Required for the formation of a threonylcarbamoyl group on adenosine at position 37 (t(6)A37) in tRNAs that read codons beginning with adenine. Is involved in the transfer of the threonylcarbamoyl moiety of threonylcarbamoyl-AMP (TC-AMP) to the N6 group of A37, together with TsaE and TsaB. TsaD likely plays a direct catalytic role in this reaction. This Mycoplasma pneumoniae (strain ATCC 29342 / M129 / Subtype 1) (Mycoplasmoides pneumoniae) protein is tRNA N6-adenosine threonylcarbamoyltransferase.